A 109-amino-acid polypeptide reads, in one-letter code: Large ribosomal subunit protein uL22 (109 aa).

It belongs to the universal ribosomal protein uL22 family. Part of the 50S ribosomal subunit.

Its function is as follows. This protein binds specifically to 23S rRNA; its binding is stimulated by other ribosomal proteins, e.g. L4, L17, and L20. It is important during the early stages of 50S assembly. It makes multiple contacts with different domains of the 23S rRNA in the assembled 50S subunit and ribosome. The globular domain of the protein is located near the polypeptide exit tunnel on the outside of the subunit, while an extended beta-hairpin is found that lines the wall of the exit tunnel in the center of the 70S ribosome. The chain is Large ribosomal subunit protein uL22 from Aromatoleum aromaticum (strain DSM 19018 / LMG 30748 / EbN1) (Azoarcus sp. (strain EbN1)).